A 663-amino-acid polypeptide reads, in one-letter code: MSWLSSSQGVVLTAYHPSGKDQTVGNSHAKAGEEATSSRRYGQYTMNQESTTIKVMEKPPFDRSISQDSLDELSMEDYWIELENIKKSSENSQEDQEVVVVKEPDEGELEEEWLKEAGLSNLFGESAGDPQESIVFLSTLTRTQAAAVQKRVETVSQTLRKKNKQYQIPDVRDIFAQQRESKETAPGGTESQSLRTNENKYQGRDDEASNLVGEEKLIPPEETPAPETDINLEVSFAEQALNQKESSKEKIQKSKGDDATLPSFRLPKDKTGTTRIGDLAPQDMKKVCHLALIELTALYDVLGIELKQQKAVKIKTKDSGLFCVPLTALLEQDQRKVPGMRIPLIFQKLISRIEERGLETEGLLRIPGAAIRIKNLCQELEAKFYEGTFNWESVKQHDAASLLKLFIRELPQPLLSVEYLKAFQAVQNLPTKKQQLQALNLLVILLPDANRDTLKALLEFLQRVIDNKEKNKMTVMNVAMVMAPNLFMCHALGLKSSEQREFVMAAGTANTMHLLIKYQKLLWTIPKFIVNQVRKQNTENHKKDKRAMKKLLKKMAYDREKYEKQDKSTNDADVPQGVIRVQAPHLSKVSMAIQLTEELKASDVLARFLSQESGVAQTLKKGEVFLYEIGGNIGERCLDDDTYMKDLYQLNPNAEWVIKSKPL.

The disordered stretch occupies residues 15–37; it reads YHPSGKDQTVGNSHAKAGEEATS. 2 positions are modified to phosphoserine: serine 66 and serine 69. Threonine 158 carries the post-translational modification Phosphothreonine. 2 disordered regions span residues 179-227 and 243-277; these read RESK…PAPE and QKESSKEKIQKSKGDDATLPSFRLPKDKTGTTRIG. Basic and acidic residues-rich tracts occupy residues 197 to 219 and 245 to 258; these read NENKYQGRDDEASNLVGEEKLIP and ESSKEKIQKSKGDD. At serine 263 the chain carries Phosphoserine. The region spanning 324 to 523 is the Rho-GAP domain; the sequence is VPLTALLEQD…LLIKYQKLLW (200 aa). Serine 610 carries the post-translational modification Phosphoserine.

Interacts with MPHOSPH6.

The protein localises to the cytoplasm. Its function is as follows. Rho GTPase activating protein that suppresses F-actin polymerization by inhibiting Rho. Rho GTPase activating proteins act by converting Rho-type GTPases to an inactive GDP-bound state. Plays a key role in tissue tension and 3D tissue shape by regulating cortical actomyosin network formation. Acts downstream of YAP1 and inhibits actin polymerization, which in turn reduces nuclear localization of YAP1. Regulates cell shape, spreading, and migration. This is Rho GTPase-activating protein 18 from Homo sapiens (Human).